The primary structure comprises 374 residues: C-X-C chemokine receptor type 5 (374 aa).

Residues 1 to 57 are Extracellular-facing; the sequence is MNSPISLDMGAITYNMDDLYKELAIYSNSTEIPLQDSIFCSTEEGPLLTSFKTIFMP. Residue Asn-28 is glycosylated (N-linked (GlcNAc...) asparagine). A helical membrane pass occupies residues 58–78; it reads VAYSLIFLLGMMGNILVLVIL. Over 79-90 the chain is Cytoplasmic; sequence ERHRHTRSSTET. The chain crosses the membrane as a helical span at residues 91 to 111; that stretch reads FLFHLAVADLLLVFILPFAVA. Over 112–126 the chain is Extracellular; the sequence is EGSVGWVLGTFLCKT. Residues Cys-124 and Cys-204 are joined by a disulfide bond. Residues 127 to 147 traverse the membrane as a helical segment; that stretch reads VIALHKINFYCSSLLLACIAV. Residues 148–169 lie on the Cytoplasmic side of the membrane; the sequence is DRYLAIVHAVHAYRRRRLLSIH. The helical transmembrane segment at 170-190 threads the bilayer; the sequence is ITCSTIWLAGFLFALPELLFA. Over 191 to 221 the chain is Extracellular; it reads KVVQPHNNESLPQCIFSQENEAETRAWFASR. Asn-198 is a glycosylation site (N-linked (GlcNAc...) asparagine). A helical membrane pass occupies residues 222 to 242; the sequence is FLYHTGGFLLPMLVMAWCYVG. Topologically, residues 243 to 261 are cytoplasmic; sequence VVHRLLQAQRRPQRQKAVR. The helical transmembrane segment at 262–282 threads the bilayer; the sequence is VAILVTSIFLLCWSPYHIVIF. The Extracellular portion of the chain corresponds to 283–306; the sequence is LDTLERLKAVNSSCELSGYLSVAI. The chain crosses the membrane as a helical span at residues 307 to 327; the sequence is TLCEFLGLAHCCLNPMLYTFA. Topologically, residues 328–374 are cytoplasmic; it reads GVKFRSDLSRLLTKLGCAGPASLCQLFPGWRKSSLSESENATSLTTF.

It belongs to the G-protein coupled receptor 1 family. In terms of tissue distribution, expressed in neuronal and lymphatic tissue.

It is found in the cell membrane. Cytokine receptor that binds to B-lymphocyte chemoattractant (BLC). Involved in B-cell migration into B-cell follicles of spleen and Peyer patches but not into those of mesenteric or peripheral lymph nodes. The protein is C-X-C chemokine receptor type 5 (Cxcr5) of Rattus norvegicus (Rat).